The primary structure comprises 123 residues: Large ribosomal subunit protein bL20 (123 aa).

The protein belongs to the bacterial ribosomal protein bL20 family.

In terms of biological role, binds directly to 23S ribosomal RNA and is necessary for the in vitro assembly process of the 50S ribosomal subunit. It is not involved in the protein synthesizing functions of that subunit. This Chlamydia muridarum (strain MoPn / Nigg) protein is Large ribosomal subunit protein bL20 (rplT).